A 212-amino-acid chain; its full sequence is Imidazole glycerol phosphate synthase subunit HisH (212 aa).

Positions 1–211 constitute a Glutamine amidotransferase type-1 domain; it reads MIGVIDYGMG…TKMAAEQQVK (211 aa). The active-site Nucleophile is the C79. Catalysis depends on residues H186 and E188.

As to quaternary structure, heterodimer of HisH and HisF.

Its subcellular location is the cytoplasm. The enzyme catalyses 5-[(5-phospho-1-deoxy-D-ribulos-1-ylimino)methylamino]-1-(5-phospho-beta-D-ribosyl)imidazole-4-carboxamide + L-glutamine = D-erythro-1-(imidazol-4-yl)glycerol 3-phosphate + 5-amino-1-(5-phospho-beta-D-ribosyl)imidazole-4-carboxamide + L-glutamate + H(+). It carries out the reaction L-glutamine + H2O = L-glutamate + NH4(+). It functions in the pathway amino-acid biosynthesis; L-histidine biosynthesis; L-histidine from 5-phospho-alpha-D-ribose 1-diphosphate: step 5/9. Its function is as follows. IGPS catalyzes the conversion of PRFAR and glutamine to IGP, AICAR and glutamate. The HisH subunit catalyzes the hydrolysis of glutamine to glutamate and ammonia as part of the synthesis of IGP and AICAR. The resulting ammonia molecule is channeled to the active site of HisF. This Bacillus velezensis (strain DSM 23117 / BGSC 10A6 / LMG 26770 / FZB42) (Bacillus amyloliquefaciens subsp. plantarum) protein is Imidazole glycerol phosphate synthase subunit HisH.